The sequence spans 226 residues: Phosphoribosylformylglycinamidine synthase subunit PurQ (226 aa).

The region spanning 2–225 (RFGIVVFPGS…MHYLEGGKNN (224 aa)) is the Glutamine amidotransferase type-1 domain. Catalysis depends on Cys86, which acts as the Nucleophile. Catalysis depends on residues His194 and Glu196.

Part of the FGAM synthase complex composed of 1 PurL, 1 PurQ and 2 PurS subunits.

Its subcellular location is the cytoplasm. The catalysed reaction is N(2)-formyl-N(1)-(5-phospho-beta-D-ribosyl)glycinamide + L-glutamine + ATP + H2O = 2-formamido-N(1)-(5-O-phospho-beta-D-ribosyl)acetamidine + L-glutamate + ADP + phosphate + H(+). The enzyme catalyses L-glutamine + H2O = L-glutamate + NH4(+). The protein operates within purine metabolism; IMP biosynthesis via de novo pathway; 5-amino-1-(5-phospho-D-ribosyl)imidazole from N(2)-formyl-N(1)-(5-phospho-D-ribosyl)glycinamide: step 1/2. Part of the phosphoribosylformylglycinamidine synthase complex involved in the purines biosynthetic pathway. Catalyzes the ATP-dependent conversion of formylglycinamide ribonucleotide (FGAR) and glutamine to yield formylglycinamidine ribonucleotide (FGAM) and glutamate. The FGAM synthase complex is composed of three subunits. PurQ produces an ammonia molecule by converting glutamine to glutamate. PurL transfers the ammonia molecule to FGAR to form FGAM in an ATP-dependent manner. PurS interacts with PurQ and PurL and is thought to assist in the transfer of the ammonia molecule from PurQ to PurL. The polypeptide is Phosphoribosylformylglycinamidine synthase subunit PurQ (Alkaliphilus metalliredigens (strain QYMF)).